The following is a 163-amino-acid chain: Putative defense protein 3 (163 aa).

The signal sequence occupies residues 1–18; sequence MMFAYIVAVVSALALTSA. A Reelin domain is found at 19-163; it reads YPTGAPSSTC…SAPVTVLSHK (145 aa). Cysteines 28 and 103 form a disulfide.

This sequence belongs to the insect defense protein family.

It is found in the secreted. May have antimicrobial activity. This is Putative defense protein 3 from Antheraea mylitta (Tasar silkworm).